The primary structure comprises 198 residues: dITP/XTP pyrophosphatase (198 aa).

11-16 (THNPGK) serves as a coordination point for substrate. Glu44 and Asp73 together coordinate Mg(2+). Asp73 serves as the catalytic Proton acceptor. Substrate is bound by residues Ser74, 156–159 (FGYD), Lys179, and 184–185 (HR).

Belongs to the HAM1 NTPase family. Homodimer. The cofactor is Mg(2+).

It carries out the reaction XTP + H2O = XMP + diphosphate + H(+). The enzyme catalyses dITP + H2O = dIMP + diphosphate + H(+). The catalysed reaction is ITP + H2O = IMP + diphosphate + H(+). Pyrophosphatase that catalyzes the hydrolysis of nucleoside triphosphates to their monophosphate derivatives, with a high preference for the non-canonical purine nucleotides XTP (xanthosine triphosphate), dITP (deoxyinosine triphosphate) and ITP. Seems to function as a house-cleaning enzyme that removes non-canonical purine nucleotides from the nucleotide pool, thus preventing their incorporation into DNA/RNA and avoiding chromosomal lesions. This is dITP/XTP pyrophosphatase (ysnA) from Bacillus subtilis (strain 168).